We begin with the raw amino-acid sequence, 59 residues long: Sec-independent protein translocase protein TatA (59 aa).

The chain crosses the membrane as a helical span at residues 1–21 (MFSNIGFPGLILILVAVLILF).

This sequence belongs to the TatA/E family. In terms of assembly, forms a complex with TatC.

It is found in the cell membrane. Part of the twin-arginine translocation (Tat) system that transports large folded proteins containing a characteristic twin-arginine motif in their signal peptide across membranes. TatA could form the protein-conducting channel of the Tat system. The sequence is that of Sec-independent protein translocase protein TatA from Bacillus mycoides (strain KBAB4) (Bacillus weihenstephanensis).